A 343-amino-acid polypeptide reads, in one-letter code: Glycerol-3-phosphate dehydrogenase [NAD(P)+] (343 aa).

NADPH is bound by residues Ser-15, Phe-16, Arg-36, and Lys-110. Sn-glycerol 3-phosphate-binding residues include Lys-110 and Gly-138. Residue Ala-142 coordinates NADPH. The sn-glycerol 3-phosphate site is built by Lys-193, Asp-246, Ser-256, Arg-257, and Asn-258. Residue Lys-193 is the Proton acceptor of the active site. NADPH is bound at residue Arg-257. Residue Glu-283 coordinates NADPH.

It belongs to the NAD-dependent glycerol-3-phosphate dehydrogenase family.

Its subcellular location is the cytoplasm. It carries out the reaction sn-glycerol 3-phosphate + NAD(+) = dihydroxyacetone phosphate + NADH + H(+). It catalyses the reaction sn-glycerol 3-phosphate + NADP(+) = dihydroxyacetone phosphate + NADPH + H(+). It functions in the pathway membrane lipid metabolism; glycerophospholipid metabolism. In terms of biological role, catalyzes the reduction of the glycolytic intermediate dihydroxyacetone phosphate (DHAP) to sn-glycerol 3-phosphate (G3P), the key precursor for phospholipid synthesis. This chain is Glycerol-3-phosphate dehydrogenase [NAD(P)+], found in Alcanivorax borkumensis (strain ATCC 700651 / DSM 11573 / NCIMB 13689 / SK2).